We begin with the raw amino-acid sequence, 702 residues long: DNA ligase (702 aa).

NAD(+) contacts are provided by residues 32–36 and 81–82; these read DAEYD and SL. The tract at residues 104–125 is disordered; it reads AESSAQKASLNPLVRDSDQKNR. Glu-139 contacts NAD(+). The active-site N6-AMP-lysine intermediate is Lys-141. 4 residues coordinate NAD(+): Arg-162, Glu-199, Lys-316, and Lys-340. 4 residues coordinate Zn(2+): Cys-434, Cys-437, Cys-452, and Cys-458. The 87-residue stretch at 616 to 702 folds into the BRCT domain; that stretch reads KPNHPFRDKT…KALKPEGTKV (87 aa).

The protein belongs to the NAD-dependent DNA ligase family. LigA subfamily. Mg(2+) serves as cofactor. Requires Mn(2+) as cofactor.

It carries out the reaction NAD(+) + (deoxyribonucleotide)n-3'-hydroxyl + 5'-phospho-(deoxyribonucleotide)m = (deoxyribonucleotide)n+m + AMP + beta-nicotinamide D-nucleotide.. Functionally, DNA ligase that catalyzes the formation of phosphodiester linkages between 5'-phosphoryl and 3'-hydroxyl groups in double-stranded DNA using NAD as a coenzyme and as the energy source for the reaction. It is essential for DNA replication and repair of damaged DNA. This Hamiltonella defensa subsp. Acyrthosiphon pisum (strain 5AT) protein is DNA ligase.